Here is a 352-residue protein sequence, read N- to C-terminus: Uroporphyrinogen decarboxylase (352 aa).

Residues 27-31, Asp77, Tyr154, Thr209, and His325 contribute to the substrate site; that span reads RQAGR.

Belongs to the uroporphyrinogen decarboxylase family. Homodimer.

The protein resides in the cytoplasm. It catalyses the reaction uroporphyrinogen III + 4 H(+) = coproporphyrinogen III + 4 CO2. It functions in the pathway porphyrin-containing compound metabolism; protoporphyrin-IX biosynthesis; coproporphyrinogen-III from 5-aminolevulinate: step 4/4. Functionally, catalyzes the decarboxylation of four acetate groups of uroporphyrinogen-III to yield coproporphyrinogen-III. The sequence is that of Uroporphyrinogen decarboxylase from Legionella pneumophila (strain Corby).